The following is a 338-amino-acid chain: Tetraacyldisaccharide 4'-kinase (338 aa).

An ATP-binding site is contributed by 53–60 (VAGGAGKT).

This sequence belongs to the LpxK family.

The catalysed reaction is a lipid A disaccharide + ATP = a lipid IVA + ADP + H(+). It functions in the pathway glycolipid biosynthesis; lipid IV(A) biosynthesis; lipid IV(A) from (3R)-3-hydroxytetradecanoyl-[acyl-carrier-protein] and UDP-N-acetyl-alpha-D-glucosamine: step 6/6. Its function is as follows. Transfers the gamma-phosphate of ATP to the 4'-position of a tetraacyldisaccharide 1-phosphate intermediate (termed DS-1-P) to form tetraacyldisaccharide 1,4'-bis-phosphate (lipid IVA). This chain is Tetraacyldisaccharide 4'-kinase, found in Polaromonas sp. (strain JS666 / ATCC BAA-500).